The sequence spans 634 residues: DNA-directed RNA polymerase subunit gamma (634 aa).

Cys74, Cys76, Cys89, and Cys92 together coordinate Zn(2+). Positions 471, 473, and 475 each coordinate Mg(2+).

The protein belongs to the RNA polymerase beta' chain family. RpoC1 subfamily. In cyanobacteria the RNAP catalytic core is composed of 2 alpha, 1 beta, 1 beta', 1 gamma and 1 omega subunit. When a sigma factor is associated with the core the holoenzyme is formed, which can initiate transcription. Mg(2+) serves as cofactor. It depends on Zn(2+) as a cofactor.

The enzyme catalyses RNA(n) + a ribonucleoside 5'-triphosphate = RNA(n+1) + diphosphate. Its function is as follows. DNA-dependent RNA polymerase catalyzes the transcription of DNA into RNA using the four ribonucleoside triphosphates as substrates. The polypeptide is DNA-directed RNA polymerase subunit gamma (Prochlorococcus marinus subsp. pastoris (strain CCMP1986 / NIES-2087 / MED4)).